A 111-amino-acid chain; its full sequence is Ciprofloxacin tolerance protein (111 aa).

At 1–5 (MVTAN) the chain is on the periplasmic side. The helical transmembrane segment at 6-26 (FAAIAGLSLIAVALVAVFFSP) threads the bilayer. Topologically, residues 27 to 30 (YRRW) are cytoplasmic. The chain crosses the membrane as a helical span at residues 31-51 (LGFMLAGMFFWGLLEVVRFGV). The Periplasmic segment spans residues 52–58 (QVTFEMP). Residues 59–79 (VTYSYLTALSLAMVMVTFVLL) traverse the membrane as a helical segment. The Cytoplasmic portion of the chain corresponds to 80–111 (REDKQAQKALANRQYIEHTPVYEDDQQQCSSR).

The protein resides in the cell inner membrane. Functionally, may play a role in cellular filamentation, especially in response to ciprofloxacin. Increased expression confers tolerance to the antibiotic ciprofloxacin. This Acinetobacter baumannii protein is Ciprofloxacin tolerance protein.